The sequence spans 224 residues: Putative homeobox protein R749 (224 aa).

A disordered region spans residues 139 to 162; that stretch reads KTKTIKKSTSEKKTSPKKKTTSQQ. A DNA-binding region (homeobox) is located at residues 161–220; it reads QQIKRVRLSDEERNILESQYSKNNFPSPEIRDELAKKIGKTPRQVQIWFQNKRCKDRKNL.

It localises to the host nucleus. The polypeptide is Putative homeobox protein R749 (Acanthamoeba polyphaga mimivirus (APMV)).